Reading from the N-terminus, the 482-residue chain is Cobyric acid synthase (482 aa).

The region spanning 243-430 (ACKVVVPQLE…LHGLFTSDAF (188 aa)) is the GATase cobBQ-type domain. Cys325 serves as the catalytic Nucleophile. Residue His422 is part of the active site.

It belongs to the CobB/CobQ family. CobQ subfamily.

The protein operates within cofactor biosynthesis; adenosylcobalamin biosynthesis. Its function is as follows. Catalyzes amidations at positions B, D, E, and G on adenosylcobyrinic A,C-diamide. NH(2) groups are provided by glutamine, and one molecule of ATP is hydrogenolyzed for each amidation. The protein is Cobyric acid synthase of Ruegeria sp. (strain TM1040) (Silicibacter sp.).